A 111-amino-acid chain; its full sequence is Cryptic phage CTXphi transcriptional repressor RstR (111 aa).

The 55-residue stretch at 6–60 (IRDLRVERDLNQEEVANGIGVGKNTYLAYEKGTQSPKLETVEKLAKFYGVPIAEL) folds into the HTH cro/C1-type domain. Residues 17-36 (QEEVANGIGVGKNTYLAYEK) constitute a DNA-binding region (H-T-H motif).

Its function is as follows. Transcriptional repressor of the integrated CTXPhi phage gene rstA2. The protein is Cryptic phage CTXphi transcriptional repressor RstR (rstR) of Vibrio cholerae.